Here is a 316-residue protein sequence, read N- to C-terminus: L-lactate dehydrogenase (316 aa).

NAD(+) is bound by residues methionine 14, methionine 14–leucine 150, isoleucine 15, aspartate 35, tyrosine 67, glycine 81, phenylalanine 82, valine 125, asparagine 127, and leucine 150. Arginine 95 serves as a coordination point for substrate. 2 residues coordinate substrate: arginine 158 and histidine 182. The active-site Proton acceptor is histidine 182.

It belongs to the LDH/MDH superfamily. LDH family. As to quaternary structure, homotetramer.

It carries out the reaction (S)-lactate + NAD(+) = pyruvate + NADH + H(+). It participates in fermentation; pyruvate fermentation to lactate; (S)-lactate from pyruvate: step 1/1. This Plasmodium falciparum (isolate CDC / Honduras) protein is L-lactate dehydrogenase.